The sequence spans 322 residues: Undecaprenyl-phosphate 4-deoxy-4-formamido-L-arabinose transferase (322 aa).

Residues 1–235 lie on the Cytoplasmic side of the membrane; sequence MFEIHPVKKV…TCLTTTPLRM (235 aa). The chain crosses the membrane as a helical span at residues 236 to 256; it reads LSLLGSIIAIGGFSIAVLLVI. Residues 257–269 are Periplasmic-facing; it reads LRLTFGPQWAAEG. The chain crosses the membrane as a helical span at residues 270–290; it reads VFMLFAVLFTFIGAQFIGMGL. The Cytoplasmic segment spans residues 291–322; sequence LGEYIGRIYTDVRARPRYFVQQVIRPSSKENE.

The protein belongs to the glycosyltransferase 2 family.

It is found in the cell inner membrane. The enzyme catalyses UDP-4-deoxy-4-formamido-beta-L-arabinose + di-trans,octa-cis-undecaprenyl phosphate = 4-deoxy-4-formamido-alpha-L-arabinopyranosyl di-trans,octa-cis-undecaprenyl phosphate + UDP. It functions in the pathway glycolipid biosynthesis; 4-amino-4-deoxy-alpha-L-arabinose undecaprenyl phosphate biosynthesis; 4-amino-4-deoxy-alpha-L-arabinose undecaprenyl phosphate from UDP-4-deoxy-4-formamido-beta-L-arabinose and undecaprenyl phosphate: step 1/2. The protein operates within bacterial outer membrane biogenesis; lipopolysaccharide biosynthesis. Its function is as follows. Catalyzes the transfer of 4-deoxy-4-formamido-L-arabinose from UDP to undecaprenyl phosphate. The modified arabinose is attached to lipid A and is required for resistance to polymyxin and cationic antimicrobial peptides. This chain is Undecaprenyl-phosphate 4-deoxy-4-formamido-L-arabinose transferase, found in Shigella flexneri.